Consider the following 603-residue polypeptide: Protein SHORT-ROOT 2 (603 aa).

2 disordered regions span residues 11–58 (HHHH…HSHS) and 106–140 (DFSSSSSSRQFHSGTGAPSSAPVPPPPSATTSSAG). The segment covering 31-44 (SYPSSRGSTSSPSS) has biased composition (low complexity). The span at 45 to 58 (HHTHNHTYYHHSHS) shows a compositional bias: basic residues. The span at 108 to 125 (SSSSSSRQFHSGTGAPSS) shows a compositional bias: low complexity. The region spanning 179–602 (AAPSSSGRWA…QPVVWASAWK (424 aa)) is the GRAS domain. The segment at 186-249 (RWAAQLLMEC…LTTSGPRTLR (64 aa)) is leucine repeat I (LRI). Residues 268 to 354 (ALKFQELSPW…DTPHLSITTV (87 aa)) form a VHIID region. The VHIID motif lies at 318 to 322 (LHILD). The interval 370–406 (EIGQRLEKFARLMGVPFSFRAVHHSGDLADLDLAALD) is leucine repeat II (LRII). The interval 416-514 (LAVNCVNALR…ERAVGRAIVD (99 aa)) is PFYRE. The SAW stretch occupies residues 517 to 602 (SCPASQSAER…QPVVWASAWK (86 aa)).

Belongs to the GRAS family. As to quaternary structure, does not interact with SCR1.

The protein localises to the nucleus. Functionally, putative transcription factor involved in asymmetric cell division. This Oryza sativa subsp. japonica (Rice) protein is Protein SHORT-ROOT 2 (SHR2).